We begin with the raw amino-acid sequence, 85 residues long: UPF0297 protein LGAS_0422 (85 aa).

Belongs to the UPF0297 family.

The protein is UPF0297 protein LGAS_0422 of Lactobacillus gasseri (strain ATCC 33323 / DSM 20243 / BCRC 14619 / CIP 102991 / JCM 1131 / KCTC 3163 / NCIMB 11718 / NCTC 13722 / AM63).